The following is a 236-amino-acid chain: 2-C-methyl-D-erythritol 4-phosphate cytidylyltransferase (236 aa).

It belongs to the IspD/TarI cytidylyltransferase family. IspD subfamily. In terms of assembly, homodimer.

The catalysed reaction is 2-C-methyl-D-erythritol 4-phosphate + CTP + H(+) = 4-CDP-2-C-methyl-D-erythritol + diphosphate. It participates in isoprenoid biosynthesis; isopentenyl diphosphate biosynthesis via DXP pathway; isopentenyl diphosphate from 1-deoxy-D-xylulose 5-phosphate: step 2/6. In terms of biological role, catalyzes the formation of 4-diphosphocytidyl-2-C-methyl-D-erythritol from CTP and 2-C-methyl-D-erythritol 4-phosphate (MEP). In Salmonella arizonae (strain ATCC BAA-731 / CDC346-86 / RSK2980), this protein is 2-C-methyl-D-erythritol 4-phosphate cytidylyltransferase.